A 131-amino-acid chain; its full sequence is D-ribose pyranase (131 aa).

Catalysis depends on histidine 20, which acts as the Proton donor. Residues aspartate 28, histidine 98, and 120–122 (YAN) each bind substrate.

It belongs to the RbsD / FucU family. RbsD subfamily. In terms of assembly, homodecamer.

The protein resides in the cytoplasm. It carries out the reaction beta-D-ribopyranose = beta-D-ribofuranose. The protein operates within carbohydrate metabolism; D-ribose degradation; D-ribose 5-phosphate from beta-D-ribopyranose: step 1/2. Functionally, catalyzes the interconversion of beta-pyran and beta-furan forms of D-ribose. The polypeptide is D-ribose pyranase (Symbiobacterium thermophilum (strain DSM 24528 / JCM 14929 / IAM 14863 / T)).